The chain runs to 356 residues: tRNA N6-adenosine threonylcarbamoyltransferase (356 aa).

Fe cation contacts are provided by His110 and His114. Substrate-binding positions include 133–137, Asp166, Gly179, and Asn276; that span reads LVSGG. Fe cation is bound at residue Asp304.

This sequence belongs to the KAE1 / TsaD family. Fe(2+) serves as cofactor.

It localises to the cytoplasm. It catalyses the reaction L-threonylcarbamoyladenylate + adenosine(37) in tRNA = N(6)-L-threonylcarbamoyladenosine(37) in tRNA + AMP + H(+). Functionally, required for the formation of a threonylcarbamoyl group on adenosine at position 37 (t(6)A37) in tRNAs that read codons beginning with adenine. Is involved in the transfer of the threonylcarbamoyl moiety of threonylcarbamoyl-AMP (TC-AMP) to the N6 group of A37, together with TsaE and TsaB. TsaD likely plays a direct catalytic role in this reaction. This Teredinibacter turnerae (strain ATCC 39867 / T7901) protein is tRNA N6-adenosine threonylcarbamoyltransferase.